The chain runs to 734 residues: Photosystem I P700 chlorophyll a apoprotein A2 (734 aa).

The next 8 helical transmembrane spans lie at Ile46 to Ala69, Leu135 to Gln158, Leu175 to Ile199, Met273 to Tyr291, Leu330 to Tyr353, Ala369 to Ile395, Ala417 to His439, and Phe517 to Val535. [4Fe-4S] cluster contacts are provided by Cys559 and Cys568. 2 consecutive transmembrane segments (helical) span residues Ala575–Trp596 and Leu643–Ile665. His654, Met662, and Tyr670 together coordinate chlorophyll a. Residue Trp671 coordinates phylloquinone. Residues Leu707 to Ala727 traverse the membrane as a helical segment.

The protein belongs to the PsaA/PsaB family. As to quaternary structure, the PsaA/B heterodimer binds the P700 chlorophyll special pair and subsequent electron acceptors. PSI consists of a core antenna complex that captures photons, and an electron transfer chain that converts photonic excitation into a charge separation. The eukaryotic PSI reaction center is composed of at least 11 subunits. It depends on P700 is a chlorophyll a/chlorophyll a' dimer, A0 is one or more chlorophyll a, A1 is one or both phylloquinones and FX is a shared 4Fe-4S iron-sulfur center. as a cofactor.

It localises to the plastid. Its subcellular location is the chloroplast thylakoid membrane. It catalyses the reaction reduced [plastocyanin] + hnu + oxidized [2Fe-2S]-[ferredoxin] = oxidized [plastocyanin] + reduced [2Fe-2S]-[ferredoxin]. Functionally, psaA and PsaB bind P700, the primary electron donor of photosystem I (PSI), as well as the electron acceptors A0, A1 and FX. PSI is a plastocyanin-ferredoxin oxidoreductase, converting photonic excitation into a charge separation, which transfers an electron from the donor P700 chlorophyll pair to the spectroscopically characterized acceptors A0, A1, FX, FA and FB in turn. Oxidized P700 is reduced on the lumenal side of the thylakoid membrane by plastocyanin. The polypeptide is Photosystem I P700 chlorophyll a apoprotein A2 (Daucus carota (Wild carrot)).